A 696-amino-acid chain; its full sequence is Tegument protein UL47 (696 aa).

Composition is skewed to basic residues over residues 1 to 15 (MSVR…RAST) and 70 to 81 (RRRREARGHPGS). Disordered stretches follow at residues 1 to 39 (MSVR…GGVG) and 54 to 130 (SEVE…YLGP). The tract at residues 57–84 (EAAGEMASEEPPPRRRREARGHPGSRRA) is RNA-binding. A Nuclear localization signal motif is present at residues 70 to 84 (RRRREARGHPGSRRA). The segment covering 87 to 103 (ARAAAPPRRASFPRPRS) has biased composition (low complexity). The Nuclear export signal motif lies at 650–673 (SVLGPRVRVVDIMAQFRKLLMGDE).

The protein belongs to the alphaherpesvirinae HHV-1 UL47 family. In terms of assembly, interacts with US3 kinase. Interacts with UL31 and UL34; these interactions seem important for efficient virion nuclear egress. Interacts with UL41/VHS. Post-translationally, phosphorylated by US3. This phosphorylation is required for proper nuclear localization.

It localises to the virion tegument. The protein resides in the host nucleus. Its subcellular location is the host cytoplasm. In terms of biological role, tegument protein that can bind to various RNA transcripts. Plays a role in the attenuation of selective viral and cellular mRNA degradation by modulating the activity of host shutoff RNase UL41/VHS. Also plays a role in the primary envelopment of virions in the perinuclear space, probably by interacting with two nuclear egress proteins UL31 and UL34. This chain is Tegument protein UL47, found in Human herpesvirus 2 (strain HG52) (HHV-2).